The chain runs to 70 residues: DNA-directed RNA polymerase subunit omega (70 aa).

It belongs to the RNA polymerase subunit omega family. The RNAP catalytic core consists of 2 alpha, 1 beta, 1 beta' and 1 omega subunit. When a sigma factor is associated with the core the holoenzyme is formed, which can initiate transcription.

The enzyme catalyses RNA(n) + a ribonucleoside 5'-triphosphate = RNA(n+1) + diphosphate. Its function is as follows. Promotes RNA polymerase assembly. Latches the N- and C-terminal regions of the beta' subunit thereby facilitating its interaction with the beta and alpha subunits. This chain is DNA-directed RNA polymerase subunit omega, found in Bacillus anthracis.